The chain runs to 339 residues: Cytochrome c biogenesis protein CcsA (339 aa).

Transmembrane regions (helical) follow at residues Leu6–Trp26, Ile37–Leu57, Leu71–Ile91, Trp97–Leu117, Met142–Ile162, Ile247–Asn267, and Thr281–Ile299.

It belongs to the CcmF/CycK/Ccl1/NrfE/CcsA family. In terms of assembly, may interact with Ccs1.

The protein resides in the plastid. It is found in the chloroplast thylakoid membrane. Functionally, required during biogenesis of c-type cytochromes (cytochrome c6 and cytochrome f) at the step of heme attachment. The polypeptide is Cytochrome c biogenesis protein CcsA (Anthoceros angustus (Hornwort)).